Reading from the N-terminus, the 111-residue chain is C-type lectin lectoxin-Enh2 (111 aa).

Positions M1–G23 are cleaved as a signal peptide. A disulfide bond links C26 and C37. The C-type lectin domain occupies R33 to Q108. The Mannose-binding signature appears at E72–N74. Residues E80, N95, and D96 each coordinate Ca(2+). A disulfide bond links C82 and C99.

It belongs to the true venom lectin family. In terms of tissue distribution, expressed by the venom gland.

The protein resides in the secreted. Functionally, mannose-binding lectin which recognizes specific carbohydrate structures and agglutinates a variety of animal cells by binding to cell-surface glycoproteins and glycolipids. May be a calcium-dependent lectin. In Pseudoferania polylepis (Macleay's water snake), this protein is C-type lectin lectoxin-Enh2.